The sequence spans 104 residues: Elicitor peptide 6 (104 aa).

Positions 1–81 are excised as a propeptide; that stretch reads MEVNGEEERR…TVEETGFMAR (81 aa). The span at 48–61 shows a compositional bias: low complexity; sequence SSSIPPSSSSSSPS. A disordered region spans residues 48 to 104; sequence SSSIPPSSSSSSPSLVEEEDSGTETVEETGFMARITAVLRRRPRPPPYSSGRPGQNN. The segment covering 63–74 has biased composition (acidic residues); that stretch reads VEEEDSGTETVE.

This sequence belongs to the brassicaceae elicitor peptide family.

In terms of biological role, elicitor of plant defense. The chain is Elicitor peptide 6 (PEP6) from Arabidopsis thaliana (Mouse-ear cress).